Reading from the N-terminus, the 417-residue chain is NADH-quinone oxidoreductase subunit D (417 aa).

This sequence belongs to the complex I 49 kDa subunit family. In terms of assembly, NDH-1 is composed of 14 different subunits. Subunits NuoB, C, D, E, F, and G constitute the peripheral sector of the complex.

Its subcellular location is the cell inner membrane. The enzyme catalyses a quinone + NADH + 5 H(+)(in) = a quinol + NAD(+) + 4 H(+)(out). Functionally, NDH-1 shuttles electrons from NADH, via FMN and iron-sulfur (Fe-S) centers, to quinones in the respiratory chain. The immediate electron acceptor for the enzyme in this species is believed to be ubiquinone. Couples the redox reaction to proton translocation (for every two electrons transferred, four hydrogen ions are translocated across the cytoplasmic membrane), and thus conserves the redox energy in a proton gradient. The polypeptide is NADH-quinone oxidoreductase subunit D (Coxiella burnetii (strain CbuG_Q212) (Coxiella burnetii (strain Q212))).